Reading from the N-terminus, the 519-residue chain is MSGSRYPAAVDVAIVGSGPTASAYARILSEEAPGASIAMFEVGPTVSNPPGAHVKNIEDPERRSHAQRASEGPGAGAETVNSPGAVKSGERRARPGTYLLQDGYVFPGEDGMPVAAMSSNVGGMAAHWTAACPRPGGTERIPFLPDLEQLLDDADRLLGVTTHAFDGAPFSDLVRERLAAVVDNGRKPAFRVQPMPLAVHRREDAGLVWSGSDVVMGEVTRENPQFDLFDESLVTRVLVEDGVAAGVEVQDRRSGATHRVSARYVVVGGDALRTPQLLWASGIRPDALGRYLNDQAQVVFASRLRGVTDLQGPPAAGGTLSEQSGVAWVPYTDEAPFHGQVMQLDASPVPLAEDDPVVPGSIVGLGLFCAKDLQREDRVAFDNTVHDSYGMPAMRIHYRLTQRDHEILDRAKREIVRLGKAVGEPLVERPFVLPPGASLHYQGTTRMGETDDGESVCSPDSQVWEVPGLFVAGNGVIPTATACNPTLTAVALAVRGARKIAEELTSALLMSESDNRMVK.

Glutamate 41 provides a ligand contact to FAD. Residues 43 to 93 (GPTVSNPPGAHVKNIEDPERRSHAQRASEGPGAGAETVNSPGAVKSGERRA) form a disordered region. Basic and acidic residues predominate over residues 55–64 (KNIEDPERRS). The FAD site is built by serine 118, asparagine 120, methionine 124, threonine 129, alanine 131, and valine 234. The active-site Proton acceptor is histidine 440. Asparagine 474 and threonine 486 together coordinate FAD.

This sequence belongs to the GMC oxidoreductase family. Monomer. Requires FAD as cofactor.

It catalyses the reaction isovitexin + O2 = 3''-dehydroisovitexin + H2O2. It carries out the reaction isoorientin + O2 = 3''-dehydroisoorientin + H2O2. The catalysed reaction is mangiferin + O2 = 3'-dehydromangiferin + H2O2. In terms of biological role, FAD-dependent C-glycoside-metabolizing enzyme that participates in the degradation of certain C-glycosides by catalyzing the oxidation of the hydroxyl group at the C3 position of the sugar moiety. Shows oxidase activity toward various C-glycosides such as isovitexin, isoorientin and mangiferin but cannot use carminic acid, puerarin, orientin or aloesin. Shows weak activity (100 to 1000-fold lower) with O-glycosides. Probably plays a crucial role in the metabolism of C-glycosides in nature. The protein is C-glycoside 3-oxidase of Arthrobacter globiformis (strain ATCC 8010 / DSM 20124 / JCM 1332 / NBRC 12137 / NCIMB 8907 / NRRL B-2979 / 168).